The chain runs to 189 residues: Elongation factor P (189 aa).

This sequence belongs to the elongation factor P family.

The protein resides in the cytoplasm. Its pathway is protein biosynthesis; polypeptide chain elongation. Involved in peptide bond synthesis. Stimulates efficient translation and peptide-bond synthesis on native or reconstituted 70S ribosomes in vitro. Probably functions indirectly by altering the affinity of the ribosome for aminoacyl-tRNA, thus increasing their reactivity as acceptors for peptidyl transferase. This is Elongation factor P from Sinorhizobium medicae (strain WSM419) (Ensifer medicae).